The primary structure comprises 70 residues: Ranatuerin-2SN1 (70 aa).

An N-terminal signal peptide occupies residues 1–22 (MFTLKKSLLLIFFLGTISLSLC). Residues 23-40 (EKERDADDDEVEVIKQEE) constitute a propeptide, removed in mature form. Cys65 and Cys70 form a disulfide bridge.

This sequence belongs to the frog skin active peptide (FSAP) family. Ranatuerin subfamily. As to expression, expressed by the skin glands.

It localises to the secreted. Antimicrobial peptide. Weakly active against P.faecalis X29. Not active against fungi. Shows very weak hemolytic activity against human erythrocytes. The polypeptide is Ranatuerin-2SN1 (Sylvirana spinulosa (Fine-spined frog)).